Reading from the N-terminus, the 402-residue chain is Phosphoglycerate kinase (402 aa).

Substrate is bound by residues 24-26, Arg41, 64-67, Arg123, and Arg156; these read DFN and HMGR. Residues Lys207, Gly298, Glu329, and 358–361 contribute to the ATP site; that span reads GGDS.

The protein belongs to the phosphoglycerate kinase family. In terms of assembly, monomer.

Its subcellular location is the cytoplasm. The catalysed reaction is (2R)-3-phosphoglycerate + ATP = (2R)-3-phospho-glyceroyl phosphate + ADP. It functions in the pathway carbohydrate degradation; glycolysis; pyruvate from D-glyceraldehyde 3-phosphate: step 2/5. This is Phosphoglycerate kinase from Microcystis aeruginosa (strain NIES-843 / IAM M-2473).